Consider the following 851-residue polypeptide: Venom phosphodiesterase (851 aa).

The signal sequence occupies residues 1–23; it reads MIQQKVLFISLVAVALGLGLGLG. SMB domains are found at residues 30–73 and 74–118; these read PQVS…VLPT and QSWS…GETS. Intrachain disulfides connect Cys-34–Cys-38, Cys-34–Cys-51, Cys-38–Cys-69, Cys-49–Cys-51, Cys-49–Cys-62, Cys-55–Cys-61, Cys-62–Cys-69, Cys-78–Cys-83, Cys-78–Cys-95, Cys-83–Cys-113, Cys-93–Cys-95, Cys-93–Cys-106, Cys-99–Cys-105, Cys-106–Cys-113, Cys-124–Cys-170, and Cys-132–Cys-344. Residue Asn-39 is glycosylated (N-linked (GlcNAc...) asparagine). Residues 58–60 carry the Cell attachment site motif; the sequence is RQA. A divalent metal cation is bound by residues Asp-147 and Thr-185. The active-site AMP-threonine intermediate is Thr-185. N-linked (GlcNAc...) asparagine glycosylation is found at Asn-216, Asn-259, and Asn-270. Lys-271 lines the AMP pocket. Asp-305, His-309, Asp-352, and His-353 together coordinate a divalent metal cation. His-309 provides a ligand contact to AMP. Disulfide bonds link Cys-360–Cys-457, Cys-408–Cys-793, Cys-541–Cys-599, Cys-554–Cys-654, Cys-556–Cys-639, and Cys-762–Cys-772. The N-linked (GlcNAc...) asparagine glycan is linked to Asn-405. His-462 contacts a divalent metal cation. Asn-512, Asn-594, and Asn-745 each carry an N-linked (GlcNAc...) asparagine glycan.

The protein belongs to the nucleotide pyrophosphatase/phosphodiesterase family. As to quaternary structure, monomer cleaved in two subunits; disulfide-linked. Is synthesized as a single-chain protein and is subsequently cleaved to form a two-subunit protein held together with disulfide bonds. Requires a divalent metal cation as cofactor. As to expression, expressed by venom gland.

The protein localises to the secreted. It carries out the reaction ADP + H2O = AMP + phosphate + H(+). Its function is as follows. Hydrolyzes ADP with high activity. Shows weak or no activity on 5'-AMP, 5'-GMP, 3'-AMP, ATP, cAMP, and cGMP. Is devoid of monophosphatase and proteinase activities. Dose-dependently inhibits platelet aggregation induced by ADP (IC(50)=0.99 uM) and collagen (IC(50)=1.4 uM). The protein is Venom phosphodiesterase of Macrovipera lebetinus (Levantine viper).